Consider the following 992-residue polypeptide: Leucine-rich repeat receptor-like serine/threonine-protein kinase BAM3 (992 aa).

The first 21 residues, 1–21 (MADKIFTFFLILSSISPLLCS), serve as a signal peptide directing secretion. Residues 22 to 656 (SLISPLNLSL…ARSRGEISAK (635 aa)) lie on the Extracellular side of the membrane. N-linked (GlcNAc...) asparagine glycosylation occurs at N28. C64 and C71 form a disulfide bridge. N-linked (GlcNAc...) asparagine glycosylation is found at N75 and N87. LRR repeat units lie at residues 75 to 99 (NQSI…ISRL), 100 to 124 (SPSL…IYEL), 126 to 148 (GLEV…GFSQ), 150 to 173 (TQLV…LTTL), 174 to 199 (TRLE…SFLS), and 201 to 221 (KFLS…LANI). 2 N-linked (GlcNAc...) asparagine glycosylation sites follow: N131 and N163. N220 is a glycosylation site (N-linked (GlcNAc...) asparagine). Positions 226-231 (QLYLGY) match the CLE45 peptide binding motif. LRR repeat units lie at residues 246–270 (LINL…LGNL), 271–294 (KNLE…LGNM), 296–320 (SLKT…GLQK), 322–342 (QLFN…VSEL), 343–366 (PDLQ…LGSN), 368–391 (NLIE…CFGR), 393–414 (LKIL…LGQC), 415–438 (EPLW…LIYL), 439–462 (PNLS…EAGN), 465–489 (FSSL…IRNL), 491–513 (SLQI…IGSL), 514–536 (KSLL…EFGD), 537–561 (CMSL…ISQI), 563–585 (ILNY…LGYM), and 586–610 (KSLT…QFSY). Residues N256 and N293 are each glycosylated (N-linked (GlcNAc...) asparagine). N-linked (GlcNAc...) asparagine glycosylation occurs at N354. N-linked (GlcNAc...) asparagine glycans are attached at residues N440 and N472. N525 carries N-linked (GlcNAc...) asparagine glycosylation. N-linked (GlcNAc...) asparagine glycans are attached at residues N568, N575, N597, N613, N631, and N635. A helical membrane pass occupies residues 657 to 677 (FKLFFGLGLLGFFLVFVVLAV). The Cytoplasmic portion of the chain corresponds to 678-992 (VKNRRMRKNN…ISQAKQPNTF (315 aa)). In terms of domain architecture, Protein kinase spans 710 to 992 (VKENHVIGKG…ISQAKQPNTF (283 aa)). ATP is bound by residues 716–724 (IGKGGRGIV) and K738. The Proton acceptor role is filled by D836.

It belongs to the protein kinase superfamily. Ser/Thr protein kinase family. As to quaternary structure, interacts with CLE45, especially in roots. Binds to the dimer CLV2/CRN. As to expression, expressed in seedlings, roots, leaves, stems, inflorescences, flowers and siliques. In roots, confined to protophloem and sieve element precursor cells.

It localises to the cell membrane. It is found in the endoplasmic reticulum membrane. The catalysed reaction is L-seryl-[protein] + ATP = O-phospho-L-seryl-[protein] + ADP + H(+). It carries out the reaction L-threonyl-[protein] + ATP = O-phospho-L-threonyl-[protein] + ADP + H(+). Functionally, necessary for male gametophyte development, as well as ovule specification and function. Required for the development of high-ordered vascular strands within the leaf and a correlated control of leaf shape, size and symmetry. LRR-rich receptor-like kinase (LRR-RLK) involved in the perception of CLE45 peptide ligand which mediates root growth inhibition by repressing protophloem differentiation; this mechanism requires CRN. BRX, BAM3, and CLE45 act together to regulate the transition of protophloem cells from proliferation to differentiation, thus impinging on postembryonic growth capacity of the root meristem. Necessary for CLE45 peptide-triggered accumulation of MAKR5 in developing sieve elements. The sequence is that of Leucine-rich repeat receptor-like serine/threonine-protein kinase BAM3 from Arabidopsis thaliana (Mouse-ear cress).